The primary structure comprises 226 residues: RLA class II histocompatibility antigen, DP alpha-1 chain (226 aa).

Residues 1 to 189 (EHVSVFVIFA…PIQMPETTET (189 aa)) lie on the Extracellular side of the membrane. Asparagine 75 and asparagine 115 each carry an N-linked (GlcNAc...) asparagine glycan. Residues 84–176 (PEVIVFPKEP…LDAPLLTHWE (93 aa)) form the Ig-like C1-type domain. Cysteine 104 and cysteine 160 are joined by a disulfide. The helical transmembrane segment at 190 to 210 (VVCALGLVVGLAGVVVGIVLI) threads the bilayer. The Cytoplasmic portion of the chain corresponds to 211–226 (TKALRSSPDPRARRPL).

It belongs to the MHC class II family.

The protein resides in the membrane. In Oryctolagus cuniculus (Rabbit), this protein is RLA class II histocompatibility antigen, DP alpha-1 chain.